Here is a 247-residue protein sequence, read N- to C-terminus: Ferredoxin:CoB-CoM heterodisulfide reductase subunit C (247 aa).

The 4Fe-4S ferredoxin-type domain occupies 32–62 (TPESLGLDRCIQCGACTASCPAARFTDYSPR). [4Fe-4S] cluster contacts are provided by C41, C44, C47, C51, C84, C87, C90, and C94. Residues 216–240 (RTGTSCTEKKKNSGDLGFESDREYT) show a composition bias toward basic and acidic residues. A disordered region spans residues 216 to 247 (RTGTSCTEKKKNSGDLGFESDREYTGQEALTV).

This sequence belongs to the HdrC family. The ferredoxin:CoB-CoM heterodisulfide reductase is composed of three subunits; HdrA1, HdrB1 and HdrC1. [4Fe-4S] cluster is required as a cofactor.

The protein resides in the cytoplasm. The catalysed reaction is coenzyme B + coenzyme M + 2 oxidized [2Fe-2S]-[ferredoxin] = coenzyme M-coenzyme B heterodisulfide + 2 reduced [2Fe-2S]-[ferredoxin] + 2 H(+). The protein operates within cofactor metabolism; coenzyme M-coenzyme B heterodisulfide reduction; coenzyme B and coenzyme M from coenzyme M-coenzyme B heterodisulfide: step 1/1. Functionally, part of a complex that catalyzes the reversible reduction of CoM-S-S-CoB to the thiol-coenzymes H-S-CoM (coenzyme M) and H-S-CoB (coenzyme B). Probably involved in methylotrophic methanogenesis but not in aceticlastic methanogenesis. This chain is Ferredoxin:CoB-CoM heterodisulfide reductase subunit C, found in Methanosarcina acetivorans (strain ATCC 35395 / DSM 2834 / JCM 12185 / C2A).